The following is a 431-amino-acid chain: MGSPMASLVATLLVLTISLTFVSQSTANYFYSSPPPPVKHYTPPVKHYSPPPVYHSPPPPKKHYEYKSPPPPVKHYSPPPVYHSPPPPKKHYVYKSPPPPVKHYSPPPVYHSPPPPKKHYVYKSPPPPVKHYSPPPVYHSPPPPKKHYVYKSPPPPVKHYSPPPVYHSPPPPKKHYVYKSPPPPVKHYSPPPVYHSPPPPKKHYVYKSPPPPVKHYSPPPVYHSPPPPKKHYVYKSPPPPVKHYSPPPVYHSPPPPKKHYVYKSPPPPVKHYSPPPVYHSPPPPKKHYVYKSPPPPVKHYSPPPVYHSPPPPKKHYVYKSPPPPVKHYSPPPVYHSPPPPKKHYVYKSPPPPVKHYSPPPVYHSPPPPKKHYVYKSPPPPVKHYSPPPVYHSPPPPKEKYVYKSPPPPPVHHYSPPHHPYLYKSPPPPYHY.

An N-terminal signal peptide occupies residues 1 to 27 (MGSPMASLVATLLVLTISLTFVSQSTA). Tandem repeats lie at residues 33–41 (SPPPPVKHY), 49–55 (SPPPVYH), and 56–63 (SPPPPKKH). A 13 X 9 AA repeats of S-P-P-P-P-V-K-H-Y region spans residues 33 to 384 (SPPPPVKHYT…KSPPPPVKHY (352 aa)). Residues 42–408 (TPPVKHYSPP…KYVYKSPPPP (367 aa)) are disordered. The span at 49–59 (SPPPVYHSPPP) shows a compositional bias: pro residues. The 13 X 7 AA repeats of S-P-P-P-V-Y-H stretch occupies residues 49-391 (SPPPVYHSPP…KHYSPPPVYH (343 aa)). The segment at 56-371 (SPPPPKKHYE…YHSPPPPKKH (316 aa)) is 12 X 8 AA repeats of S-P-P-P-P-K-K-H. The tract at residues 64 to 67 (YEYK) is isodityrosine cross-linking. 3 consecutive repeat copies span residues 68–76 (SPPPPVKHY), 77–83 (SPPPVYH), and 84–91 (SPPPPKKH). A compositionally biased stretch (pro residues) spans 68–87 (SPPPPVKHYSPPPVYHSPPP). The tract at residues 92 to 95 (YVYK) is isodityrosine cross-linking. Repeat copies occupy residues 96 to 104 (SPPPPVKHY), 105 to 111 (SPPPVYH), and 112 to 119 (SPPPPKKH). Positions 96–115 (SPPPPVKHYSPPPVYHSPPP) are enriched in pro residues. Positions 120 to 123 (YVYK) are isodityrosine cross-linking. Repeat copies occupy residues 124 to 132 (SPPPPVKHY), 133 to 139 (SPPPVYH), and 140 to 147 (SPPPPKKH). The segment covering 124–143 (SPPPPVKHYSPPPVYHSPPP) has biased composition (pro residues). An isodityrosine cross-linking region spans residues 148-151 (YVYK). A run of 3 repeats spans residues 152–160 (SPPPPVKHY), 161–167 (SPPPVYH), and 168–175 (SPPPPKKH). The span at 152–171 (SPPPPVKHYSPPPVYHSPPP) shows a compositional bias: pro residues. An isodityrosine cross-linking region spans residues 176-179 (YVYK). 3 tandem repeats follow at residues 180–188 (SPPPPVKHY), 189–195 (SPPPVYH), and 196–203 (SPPPPKKH). Over residues 180 to 199 (SPPPPVKHYSPPPVYHSPPP) the composition is skewed to pro residues. The isodityrosine cross-linking stretch occupies residues 204–207 (YVYK). Repeat copies occupy residues 208-216 (SPPPPVKHY), 217-223 (SPPPVYH), and 224-231 (SPPPPKKH). The segment covering 208–227 (SPPPPVKHYSPPPVYHSPPP) has biased composition (pro residues). The interval 232–235 (YVYK) is isodityrosine cross-linking. A run of 3 repeats spans residues 236-244 (SPPPPVKHY), 245-251 (SPPPVYH), and 252-259 (SPPPPKKH). The span at 236–255 (SPPPPVKHYSPPPVYHSPPP) shows a compositional bias: pro residues. Residues 260–263 (YVYK) form an isodityrosine cross-linking region. 3 repeat units span residues 264-272 (SPPPPVKHY), 273-279 (SPPPVYH), and 280-287 (SPPPPKKH). Pro residues predominate over residues 264–283 (SPPPPVKHYSPPPVYHSPPP). The segment at 288–291 (YVYK) is isodityrosine cross-linking. 3 tandem repeats follow at residues 292-300 (SPPPPVKHY), 301-307 (SPPPVYH), and 308-315 (SPPPPKKH). Positions 292–311 (SPPPPVKHYSPPPVYHSPPP) are enriched in pro residues. Residues 316–319 (YVYK) are isodityrosine cross-linking. A run of 3 repeats spans residues 320–328 (SPPPPVKHY), 329–335 (SPPPVYH), and 336–343 (SPPPPKKH). The span at 320-339 (SPPPPVKHYSPPPVYHSPPP) shows a compositional bias: pro residues. The segment at 344–347 (YVYK) is isodityrosine cross-linking. 3 tandem repeats follow at residues 348–356 (SPPPPVKHY), 357–363 (SPPPVYH), and 364–371 (SPPPPKKH). Positions 348–367 (SPPPPVKHYSPPPVYHSPPP) are enriched in pro residues. The tract at residues 372-375 (YVYK) is isodityrosine cross-linking. Tandem repeats lie at residues 376–384 (SPPPPVKHY) and 385–391 (SPPPVYH). Residues 376–395 (SPPPPVKHYSPPPVYHSPPP) show a composition bias toward pro residues. 2 isodityrosine cross-linking regions span residues 400 to 403 (YVYK) and 420 to 423 (YLYK).

It belongs to the extensin family. Post-translationally, the proline residues of the Ser-Pro(3) repeats are hydroxylated and then O-glycosylated (arabinosylation) by HPAT1, HPAT2 and HPAT3. Around 20% of Hyp units are in the nonglycosylated form. The Ser residues are O-galactosylated. The lack of Ser-O-galactosylation does not affect Hyp-O-arabinosylation, but both types of O-glycosylation are central for the functionality of the protein. Correct Hyp-O-arabinosylation appears to be responsible for generating a bend on the EXT3 backbone around a YVY motif, which may represent a better scenario for Tyr intramolecular cross-links (isodityrosine type). In terms of processing, synthetised as soluble proteins which become insolubilised in the cell wall through the intermolecular cross-linking of Tyr on adjacent monomers. Isodityrosine (IDT) stabilizes and makes rigid the part of the polypeptide where IDT functional sites are present. Predominantly expressed in the roots.

It localises to the secreted. The protein resides in the primary cell wall. Its function is as follows. Structural component which strengthens the primary cell wall. Forms dendritic structures indicating a propensity for self-assembly through tyrosine cross-linking. Forms intermolecular cross-links exclusively by pulcherosine (three Tyr). Scaffold formation requires an unobstructed C-terminus of EXT3. Required for the correct positioning of the cell plate during cytokinesis in cells of the developing embryo. Extensins contain a characteristic repeat of the pentapeptide Ser-Pro(4). For this particular extensin, a typical repeat of Ser-Pro(3) is found. The protein is Extensin-3 of Arabidopsis thaliana (Mouse-ear cress).